We begin with the raw amino-acid sequence, 328 residues long: MSVTSQTSSSGSAAVSDCHRGIIDISGPVPGYEWEPSMTTEPVRGRVWTITDGVFRTLAIEGDTGVIAVDTFWSPGSARQYRRALQSHFPRKPVHTIIYTHDHLDHTGFGADFAPDADQILAHELTAEVIARRSSDGQLPATRTWSGERLEVSIDGAEFELIYPGPTHGTGNTALYFPNERFLYMADTVFTGPTYNIVPDFLWTSWIPNTRRLLGLDWDLYVPGHFWRLSRREFEADFELWDATAACALDALRAGVDIDNFADVKKFTYERMDEPFGSRTFRFDEFAAINVLTHMVHYQTGGWGLRDYEPYSNEPFKTTLPQRLGSPL.

Residues 1–9 (MSVTSQTSS) constitute a propeptide that is removed on maturation. Zn(2+) is bound by residues His-101, His-103, Asp-105, His-168, His-225, and Cys-247.

The protein belongs to the metallo-beta-lactamase superfamily. Part of the complex DnhAB composed of the 2,4-dinitroanisole O-demethylase alpha (DnhA) and beta (DnhB) subunits. It depends on Zn(2+) as a cofactor.

It catalyses the reaction 2,4-dinitroanisole + H2O = 2,4-dinitrophenol + methanol + H(+). Involved in the degradation of 2,4-dinitroanisole (DNAN), an insensitive munition ingredient used in explosive formulations as a replacement for 2,4,6-trinitrotoluene (TNT). Catalyzes the removal of the methyl group from 2,4-dinitroanisole (DNAN) to yield 2,4-dinitrophenol (2,4-DNP) and methanol. The protein is 2,4-dinitroanisole O-demethylase subunit alpha of Nocardioides sp. (strain JS1661).